The following is a 125-amino-acid chain: Fluoride-specific ion channel FluC (125 aa).

4 helical membrane-spanning segments follow: residues 6–26 (GFIALAGAAGTLARYWLSGLV), 34–54 (FPWGTAVVNILGCFLFGLVWE), 68–88 (AVLLTGFMGAFTTFSTFIFES), and 98–118 (LALLANLGFQTILGFAALFAG). 2 residues coordinate Na(+): glycine 76 and threonine 79.

This sequence belongs to the fluoride channel Fluc/FEX (TC 1.A.43) family.

Its subcellular location is the cell inner membrane. The catalysed reaction is fluoride(in) = fluoride(out). With respect to regulation, na(+) is not transported, but it plays an essential structural role and its presence is essential for fluoride channel function. Its function is as follows. Fluoride-specific ion channel. Important for reducing fluoride concentration in the cell, thus reducing its toxicity. In Solidesulfovibrio magneticus (strain ATCC 700980 / DSM 13731 / RS-1) (Desulfovibrio magneticus), this protein is Fluoride-specific ion channel FluC.